Here is a 179-residue protein sequence, read N- to C-terminus: Large ribosomal subunit protein uL6 (179 aa).

The protein belongs to the universal ribosomal protein uL6 family. Part of the 50S ribosomal subunit.

In terms of biological role, this protein binds to the 23S rRNA, and is important in its secondary structure. It is located near the subunit interface in the base of the L7/L12 stalk, and near the tRNA binding site of the peptidyltransferase center. The protein is Large ribosomal subunit protein uL6 of Beutenbergia cavernae (strain ATCC BAA-8 / DSM 12333 / CCUG 43141 / JCM 11478 / NBRC 16432 / NCIMB 13614 / HKI 0122).